Reading from the N-terminus, the 80-residue chain is Protein CEBPZOS (80 aa).

Residues 15–31 traverse the membrane as a helical segment; sequence GVLAAELVGVAGAYCLF.

The protein resides in the mitochondrion membrane. The protein is Protein CEBPZOS of Mus musculus (Mouse).